Reading from the N-terminus, the 583-residue chain is Hyaluronan synthase-related protein (583 aa).

Topologically, residues 1–29 (MENTTDPENIPVSKPKYPTIRRILSQTFR) are cytoplasmic. A helical membrane pass occupies residues 30 to 50 (ILLLFSITTAYVLGYQALCHQ). Residues 51–52 (GL) lie on the Extracellular side of the membrane. The chain crosses the membrane as a helical span at residues 53–73 (LITFGLYGAAMLLHLLMQGIF). Residues 74-393 (ANLEIRRIEK…CNAQWWHQHH (320 aa)) lie on the Cytoplasmic side of the membrane. A helical transmembrane segment spans residues 394–414 (IWMTYESATGIFFPFFVTAVL). At 415 to 425 (IRLMYSSSLCN) the chain is on the extracellular side. A helical transmembrane segment spans residues 426–446 (IVWLFLCIQIMSLLLSLYASW). The Cytoplasmic portion of the chain corresponds to 447–457 (QSKKLSMVLMS). The chain crosses the membrane as a helical span at residues 458–478 (LYSTLYIIWLLPCQLVALLTI). The Extracellular portion of the chain corresponds to 479–497 (AKSDWGTSGRKKVVNNYVP). Residues 498 to 518 (LFSLSIWAAVLLGGLCYSMYI) form a helical membrane-spanning segment. At 519-535 (GCRKDWSKPQANRELYH) the chain is on the cytoplasmic side. Residues 536-556 (LLYGCAGYMAYWVLMTVIYCV) traverse the membrane as a helical segment. The Extracellular segment spans residues 557–583 (SGSCCKMRSQAVPQTHDITSLSVSLLV).

The protein belongs to the NodC/HAS family.

Its subcellular location is the membrane. This Xenopus laevis (African clawed frog) protein is Hyaluronan synthase-related protein (has-rs).